A 351-amino-acid polypeptide reads, in one-letter code: Signal recognition particle receptor FtsY (351 aa).

GTP contacts are provided by residues 156-163, 238-242, and 302-305; these read GINGTGKT, DTAGR, and TKLD.

It belongs to the GTP-binding SRP family. FtsY subfamily. In terms of assembly, part of the signal recognition particle protein translocation system, which is composed of SRP and FtsY. SRP is a ribonucleoprotein composed of Ffh and a 4.5S RNA molecule.

The protein localises to the cell membrane. Its subcellular location is the cytoplasm. It catalyses the reaction GTP + H2O = GDP + phosphate + H(+). Its function is as follows. Involved in targeting and insertion of nascent membrane proteins into the cytoplasmic membrane. Acts as a receptor for the complex formed by the signal recognition particle (SRP) and the ribosome-nascent chain (RNC). Interaction with SRP-RNC leads to the transfer of the RNC complex to the Sec translocase for insertion into the membrane, the hydrolysis of GTP by both Ffh and FtsY, and the dissociation of the SRP-FtsY complex into the individual components. The chain is Signal recognition particle receptor FtsY from Buchnera aphidicola subsp. Schizaphis graminum (strain Sg).